We begin with the raw amino-acid sequence, 26 residues long: uncharacterized protein (26 aa).

Belongs to the asfivirus E66L family.

This is an uncharacterized protein from Ornithodoros (relapsing fever ticks).